Here is a 246-residue protein sequence, read N- to C-terminus: Alpha-tubulin N-acetyltransferase (246 aa).

Residues 21–202 form the N-acetyltransferase domain; sequence LTLVPDGVSR…NNFVVFHSFF (182 aa). Acetyl-CoA-binding positions include 135 to 148 and 172 to 181; these read FYVDESCQRQGYGK and SNKLLGFLRK.

The protein belongs to the acetyltransferase ATAT1 family.

It carries out the reaction L-lysyl-[alpha-tubulin] + acetyl-CoA = N(6)-acetyl-L-lysyl-[alpha-tubulin] + CoA + H(+). In terms of biological role, specifically acetylates 'Lys-40' in alpha-tubulin on the lumenal side of microtubules. Promotes microtubule destabilization and accelerates microtubule dynamics; this activity may be independent of acetylation activity. Acetylates alpha-tubulin with a slow enzymatic rate, due to a catalytic site that is not optimized for acetyl transfer. Enters the microtubule through each end and diffuses quickly throughout the lumen of microtubules. Acetylates only long/old microtubules because of its slow acetylation rate since it does not have time to act on dynamically unstable microtubules before the enzyme is released. This Leishmania major protein is Alpha-tubulin N-acetyltransferase.